We begin with the raw amino-acid sequence, 657 residues long: Protein translocase subunit SecA 2 (657 aa).

ATP contacts are provided by residues Q93, 111 to 115 (GEGKT), and D531.

This sequence belongs to the SecA family. Monomer and homodimer. Part of the essential Sec protein translocation apparatus which comprises SecA, SecYEG and auxiliary proteins SecDF. Other proteins may also be involved.

The protein resides in the cell inner membrane. It localises to the cytoplasm. It catalyses the reaction ATP + H2O + cellular proteinSide 1 = ADP + phosphate + cellular proteinSide 2.. Part of the Sec protein translocase complex. Interacts with the SecYEG preprotein conducting channel. Has a central role in coupling the hydrolysis of ATP to the transfer of proteins into and across the cell membrane, serving as an ATP-driven molecular motor driving the stepwise translocation of polypeptide chains across the membrane. The protein is Protein translocase subunit SecA 2 of Rhodopirellula baltica (strain DSM 10527 / NCIMB 13988 / SH1).